Consider the following 317-residue polypeptide: Serpentine receptor class delta-47 (317 aa).

7 helical membrane passes run 8–28 (IFYPIFLALVFPTQIFLFVVV), 42–62 (VLFCNCIFQTISVVLLCLLQL), 89–109 (CLYFVSQSTSVVSNILVLLTI), 128–148 (IVIILLLVPVFVLVGAEIYSV), 185–205 (YLIISIVFGSVFLLPPMGLYT), 239–259 (ACLPLVSLCPIFVCYVIVIGT), and 270–290 (ISVLVLLPTFFDPYITLYSVA).

The protein belongs to the nematode receptor-like protein srd family.

The protein localises to the membrane. This chain is Serpentine receptor class delta-47 (srd-47), found in Caenorhabditis elegans.